A 197-amino-acid polypeptide reads, in one-letter code: Protein GrpE (197 aa).

Residues M1–R40 form a disordered region.

Belongs to the GrpE family. As to quaternary structure, homodimer.

The protein resides in the cytoplasm. Participates actively in the response to hyperosmotic and heat shock by preventing the aggregation of stress-denatured proteins, in association with DnaK and GrpE. It is the nucleotide exchange factor for DnaK and may function as a thermosensor. Unfolded proteins bind initially to DnaJ; upon interaction with the DnaJ-bound protein, DnaK hydrolyzes its bound ATP, resulting in the formation of a stable complex. GrpE releases ADP from DnaK; ATP binding to DnaK triggers the release of the substrate protein, thus completing the reaction cycle. Several rounds of ATP-dependent interactions between DnaJ, DnaK and GrpE are required for fully efficient folding. The chain is Protein GrpE from Escherichia coli (strain K12 / DH10B).